The chain runs to 152 residues: Nucleoside diphosphate kinase B (152 aa).

The tract at residues 1 to 66 (MANLERTFIA…DRPFFPGLVK (66 aa)) is interaction with AKAP13. K12, F60, R88, T94, R105, and N115 together coordinate ATP. H118 serves as the catalytic Pros-phosphohistidine intermediate.

This sequence belongs to the NDK family. Hexamer of two different chains: An and B (A6, A5B, A4B2, A3B3, A2B4, AB5, B6). Interacts with CAPN8. Interacts with AKAP13. Interacts with ITGB1BP1 (via C-terminal domain region). Interacts with BCL2L10. It depends on Mg(2+) as a cofactor. In terms of tissue distribution, expressed in the base region of the oxyntic and pyloric mucosae.

Its subcellular location is the cytoplasm. It localises to the cell projection. The protein resides in the lamellipodium. The protein localises to the ruffle. It is found in the nucleus. The enzyme catalyses a 2'-deoxyribonucleoside 5'-diphosphate + ATP = a 2'-deoxyribonucleoside 5'-triphosphate + ADP. It carries out the reaction a ribonucleoside 5'-diphosphate + ATP = a ribonucleoside 5'-triphosphate + ADP. The catalysed reaction is ATP + protein L-histidine = ADP + protein N-phospho-L-histidine.. Functionally, major role in the synthesis of nucleoside triphosphates other than ATP. The ATP gamma phosphate is transferred to the NDP beta phosphate via a ping-pong mechanism, using a phosphorylated active-site intermediate. Negatively regulates Rho activity by interacting with AKAP13/LBC. Acts as a transcriptional activator of the MYC gene; binds DNA non-specifically. Binds to both single-stranded guanine- and cytosine-rich strands within the nuclease hypersensitive element (NHE) III(1) region of the MYC gene promoter. Does not bind to duplex NHE III(1). Has G-quadruplex (G4) DNA-binding activity, which is independent of its nucleotide-binding and kinase activity. Binds both folded and unfolded G4 with similar low nanomolar affinities. Stabilizes folded G4s regardless of whether they are prefolded or not. Exhibits histidine protein kinase activity. This Mus musculus (Mouse) protein is Nucleoside diphosphate kinase B (Nme2).